Consider the following 218-residue polypeptide: Pyridoxine/pyridoxamine 5'-phosphate oxidase (218 aa).

Substrate contacts are provided by residues Arg14–Tyr17 and Lys72. FMN contacts are provided by residues Arg67–Lys72, Tyr82–Thr83, Arg88, Lys89, and Gln111. Tyr129, Arg133, and Ser137 together coordinate substrate. FMN is bound by residues Gln146–Ser147 and Trp191. Arg197–His199 serves as a coordination point for substrate. Position 201 (Arg201) interacts with FMN.

This sequence belongs to the pyridoxamine 5'-phosphate oxidase family. In terms of assembly, homodimer. FMN is required as a cofactor.

It catalyses the reaction pyridoxamine 5'-phosphate + O2 + H2O = pyridoxal 5'-phosphate + H2O2 + NH4(+). It carries out the reaction pyridoxine 5'-phosphate + O2 = pyridoxal 5'-phosphate + H2O2. It participates in cofactor metabolism; pyridoxal 5'-phosphate salvage; pyridoxal 5'-phosphate from pyridoxamine 5'-phosphate: step 1/1. The protein operates within cofactor metabolism; pyridoxal 5'-phosphate salvage; pyridoxal 5'-phosphate from pyridoxine 5'-phosphate: step 1/1. In terms of biological role, catalyzes the oxidation of either pyridoxine 5'-phosphate (PNP) or pyridoxamine 5'-phosphate (PMP) into pyridoxal 5'-phosphate (PLP). The sequence is that of Pyridoxine/pyridoxamine 5'-phosphate oxidase from Enterobacter sp. (strain 638).